The sequence spans 109 residues: Ribulose bisphosphate carboxylase small subunit (109 aa).

This sequence belongs to the RuBisCO small chain family. Heterohexadecamer of 8 large and 8 small subunits.

Its subcellular location is the carboxysome. RuBisCO catalyzes two reactions: the carboxylation of D-ribulose 1,5-bisphosphate, the primary event in carbon dioxide fixation, as well as the oxidative fragmentation of the pentose substrate in the photorespiration process. Both reactions occur simultaneously and in competition at the same active site. Although the small subunit is not catalytic it is essential for maximal activity. This Prochlorothrix hollandica protein is Ribulose bisphosphate carboxylase small subunit.